The primary structure comprises 276 residues: Arginine and glutamate-rich protein 1 (276 aa).

Basic residues-rich tracts occupy residues 1–30 (MGRS…RSRS) and 38–59 (ARKR…RSRS). A necessary and sufficient for RNA binding region spans residues 1–77 (MGRSRSRSSS…RRDRERERER (77 aa)). The interval 1 to 117 (MGRSRSRSSS…EKKAEFERQR (117 aa)) is disordered. Composition is skewed to basic and acidic residues over residues 67 to 87 (SRRD…RIDI) and 96 to 117 (SSLD…ERQR). Residues 78 to 276 (ASSPPDRIDI…KLSFSLKSQD (199 aa)) are necessary and sufficient for transcriptional regulation. Positions 175 to 179 (LLEEL) match the LXXLL motif 1; degenerate motif. An LXXLL motif 2; degenerate motif is present at residues 204 to 208 (LERIL). The segment covering 240–256 (RMKLEQERQRQQKEEQK) has biased composition (basic and acidic residues). The interval 240-276 (RMKLEQERQRQQKEEQKIILGKGKSRPKLSFSLKSQD) is disordered.

It belongs to the ARGLU1 family.

It localises to the nucleus. The protein localises to the nucleus speckle. The protein resides in the chromosome. In terms of biological role, dual function regulator of gene expression; regulator of transcription and modulator of alternative splicing. General coactivator of nuclear receptor-induced gene expression. The sequence is that of Arginine and glutamate-rich protein 1 (ARGLU1) from Gallus gallus (Chicken).